The primary structure comprises 465 residues: Cysteine--tRNA ligase (465 aa).

Residue Cys-30 coordinates Zn(2+). The 'HIGH' region signature appears at 32–42 (ITVYDYCHVGH). The Zn(2+) site is built by Cys-214, His-239, and Glu-243. The 'KMSKS' region motif lies at 271–275 (KMSKS). Lys-274 lines the ATP pocket.

Belongs to the class-I aminoacyl-tRNA synthetase family. Monomer. Zn(2+) serves as cofactor.

Its subcellular location is the cytoplasm. It carries out the reaction tRNA(Cys) + L-cysteine + ATP = L-cysteinyl-tRNA(Cys) + AMP + diphosphate. The sequence is that of Cysteine--tRNA ligase from Burkholderia cenocepacia (strain ATCC BAA-245 / DSM 16553 / LMG 16656 / NCTC 13227 / J2315 / CF5610) (Burkholderia cepacia (strain J2315)).